Here is a 449-residue protein sequence, read N- to C-terminus: Probable pectate lyase P59 (449 aa).

The N-terminal stretch at 1 to 22 (MGGPKIKYSFLFLCITFATIIP) is a signal peptide. N-linked (GlcNAc...) asparagine glycosylation is found at Asn56, Asn80, and Asn81. The Ca(2+) site is built by Asp245, Asp269, and Asp273. The active site involves Arg325.

It belongs to the polysaccharide lyase 1 family. It depends on Ca(2+) as a cofactor. As to expression, expressed in anthers and pollen.

The catalysed reaction is Eliminative cleavage of (1-&gt;4)-alpha-D-galacturonan to give oligosaccharides with 4-deoxy-alpha-D-galact-4-enuronosyl groups at their non-reducing ends.. Its pathway is glycan metabolism; pectin degradation; 2-dehydro-3-deoxy-D-gluconate from pectin: step 2/5. In terms of biological role, might be needed during pollen development and tube growth. The polypeptide is Probable pectate lyase P59 (LAT59) (Solanum lycopersicum (Tomato)).